A 447-amino-acid chain; its full sequence is C4-dicarboxylate transport protein (447 aa).

10 consecutive transmembrane segments (helical) span residues 21-41 (HLYV…YFAP), 57-77 (LVKM…IAGM), 92-112 (IYFL…VNIV), 141-161 (SLIG…LASG), 163-183 (ILQV…VGEA), 201-221 (LVAI…AYTV), 232-252 (LAML…IVLG), 320-340 (IYMT…LSWG), 345-365 (LLAV…AGFV), and 368-388 (AATL…IFGV).

It belongs to the dicarboxylate/amino acid:cation symporter (DAACS) (TC 2.A.23) family.

It is found in the cell inner membrane. In terms of biological role, responsible for the transport of dicarboxylates such as succinate, fumarate, and malate from the periplasm across the membrane. This chain is C4-dicarboxylate transport protein, found in Granulibacter bethesdensis (strain ATCC BAA-1260 / CGDNIH1).